A 526-amino-acid chain; its full sequence is G-protein coupled receptor 161 (526 aa).

Topologically, residues 1–27 (MNGSKNGTAVANSTNGLDDNGLMVLES) are extracellular. N-linked (GlcNAc...) asparagine glycans are attached at residues Asn2, Asn6, and Asn12. Residues 28–48 (VSIIIIAILACLGNLVIVVTL) form a helical membrane-spanning segment. Topologically, residues 49–60 (YKKPYLLTPSNK) are cytoplasmic. A helical transmembrane segment spans residues 61–81 (FVFSLTSSNLLLSVLMLPFVV). At 82–98 (ASSVRRDWMFGVVWCNF) the chain is on the extracellular side. A disulfide bridge links Cys96 with Cys174. Asn97 is a glycosylation site (N-linked (GlcNAc...) asparagine). The helical transmembrane segment at 99–119 (TALLHLLVSSSSMLTLGAIAI) threads the bilayer. Residues 120–139 (DRYYAVLYPMIYPMKITGNR) are Cytoplasmic-facing. The helical transmembrane segment at 140-160 (AVLAIVYIWLHSLVGCLPPLF) threads the bilayer. Residues 161 to 186 (GWSSFEFDRFKWTCTVSWHKEISYTA) lie on the Extracellular side of the membrane. The chain crosses the membrane as a helical span at residues 187–207 (FWVTWCCLLPLVAMLVCYGVI). The Cytoplasmic portion of the chain corresponds to 208 to 263 (FRVARIKARKVYCGSVVVSQEESSSQNNGRKNSNTSTSSSGSRKSLIYSGSQCKAF). The tract at residues 231-250 (SSQNNGRKNSNTSTSSSGSR) is disordered. Residues 264 to 284 (ITILVVLGTFLTTWGPYVVVI) form a helical membrane-spanning segment. At 285 to 300 (STEALLGKNSVSPQVE) the chain is on the extracellular side. Residues 301–321 (TLVSWLSFTSAVCHPLIYGLW) traverse the membrane as a helical segment. Topologically, residues 322 to 526 (NKTVRKELLG…EEEMEREEKM (205 aa)) are cytoplasmic. Positions 505-526 (IDEGIVKDDDDDEEEMEREEKM) are disordered. The span at 512-526 (DDDDDEEEMEREEKM) shows a compositional bias: acidic residues.

It belongs to the G-protein coupled receptor 1 family.

The protein localises to the cell projection. Its subcellular location is the cilium membrane. It localises to the cell membrane. Key negative regulator of Shh signaling during neural tube development. Recruited to primary cilia and acts as a regulator of the PKA-dependent basal repression machinery in Shh signaling by increasing cAMP levels, leading to promote the PKA-dependent processing of gli3 into gli3r and repress the Shh signaling. In presence of shh, it is removed from primary cilia, preventing its activity and allowing activation of the Shh signaling. Required in left/right patterning by modulating Ca(2+) levels in the cells surrounding the Kupffer vesicle. The protein is G-protein coupled receptor 161 (gpr161) of Danio rerio (Zebrafish).